We begin with the raw amino-acid sequence, 122 residues long: Acidic phospholipase A2 (122 aa).

7 disulfide bridges follow: cysteine 26-cysteine 115, cysteine 28-cysteine 44, cysteine 43-cysteine 95, cysteine 49-cysteine 122, cysteine 50-cysteine 88, cysteine 57-cysteine 81, and cysteine 75-cysteine 86. The Ca(2+) site is built by tyrosine 27, glycine 29, and glycine 31. Histidine 47 is an active-site residue. Aspartate 48 provides a ligand contact to Ca(2+). Aspartate 89 is a catalytic residue.

This sequence belongs to the phospholipase A2 family. Group II subfamily. D49 sub-subfamily. In terms of assembly, monomer. Ca(2+) serves as cofactor. As to expression, expressed by the venom gland.

The protein localises to the secreted. The catalysed reaction is a 1,2-diacyl-sn-glycero-3-phosphocholine + H2O = a 1-acyl-sn-glycero-3-phosphocholine + a fatty acid + H(+). PLA2 catalyzes the calcium-dependent hydrolysis of the 2-acyl groups in 3-sn-phosphoglycerides. This is Acidic phospholipase A2 from Gloydius blomhoffii (Mamushi).